The sequence spans 332 residues: 5-dehydro-2-deoxygluconokinase (332 aa).

It belongs to the carbohydrate kinase PfkB family.

The enzyme catalyses 5-dehydro-2-deoxy-D-gluconate + ATP = 6-phospho-5-dehydro-2-deoxy-D-gluconate + ADP + H(+). Its pathway is polyol metabolism; myo-inositol degradation into acetyl-CoA; acetyl-CoA from myo-inositol: step 5/7. Catalyzes the phosphorylation of 5-dehydro-2-deoxy-D-gluconate (2-deoxy-5-keto-D-gluconate or DKG) to 6-phospho-5-dehydro-2-deoxy-D-gluconate (DKGP). In Bacillus thuringiensis (strain Al Hakam), this protein is 5-dehydro-2-deoxygluconokinase.